The following is a 243-amino-acid chain: Adapter protein MecA (243 aa).

Residues 119–140 are disordered; it reads NQVEDGQGIAHNPTKDTNDLDP.

The protein belongs to the MecA family. Homodimer.

In terms of biological role, enables the recognition and targeting of unfolded and aggregated proteins to the ClpC protease or to other proteins involved in proteolysis. The sequence is that of Adapter protein MecA from Lactiplantibacillus plantarum (strain ATCC BAA-793 / NCIMB 8826 / WCFS1) (Lactobacillus plantarum).